Consider the following 1340-residue polypeptide: Iron-sulfur cluster assembly protein SufD (1340 aa).

The span at 477–487 (NSLKHNNNNTK) shows a compositional bias: low complexity. Disordered stretches follow at residues 477-498 (NSLKHNNNNTKPSSQKYEERSS), 723-743 (HGKDNTQHDDKNNPNFRNYLN), 765-794 (NVSTDEKRETQYDVKGNNPDTETNNEQSTV), 835-865 (EKNESNEGKGNDLDATEQRENEQVGPNGEKK), and 992-1055 (NIPT…NNIQ). Over residues 723–734 (HGKDNTQHDDKN) the composition is skewed to basic and acidic residues. Residues 782–794 (NPDTETNNEQSTV) show a composition bias toward polar residues. A compositionally biased stretch (polar residues) spans 1022–1037 (DNLLQNDQATNSNVEI).

Belongs to the iron-sulfur cluster assembly SufBD family. In terms of assembly, component of a complex composed of SufB, SufC and SufD in a stoichiometric ratio of 1:2:1. Interacts with SufB. Interacts with SufC; the interaction enhances the ATPase activity of SufC.

The protein resides in the plastid. It localises to the apicoplast. It participates in cofactor biosynthesis; iron-sulfur cluster biosynthesis. Its function is as follows. Participates in the sulfur mobilization (SUF) pathway for iron-sulfur (Fe-S) cluster biogenesis. As part of a complex consisting of SufB-SufC(2)-SufD, involved in assembly of [4Fe-4S] clusters. Enhances the ATPase activity of SufC. In Plasmodium berghei (strain Anka), this protein is Iron-sulfur cluster assembly protein SufD.